The chain runs to 228 residues: Prolactin (228 aa).

The first 29 residues, 1–29, serve as a signal peptide directing secretion; the sequence is MGTKRSSLKGSLLLLLLMSSLFLFKSVES. Cys33 and Cys40 are oxidised to a cystine. Phosphoserine occurs at positions 55, 63, and 119. 2 disulfide bridges follow: Cys87/Cys203 and Cys220/Cys228.

The protein belongs to the somatotropin/prolactin family. Interacts with PRLR.

It localises to the secreted. Prolactin acts primarily on the mammary gland by promoting lactation, mammogenesis, mitogenesis and osmoregulation. The polypeptide is Prolactin (PRL) (Trichosurus vulpecula (Brush-tailed possum)).